The sequence spans 298 residues: GTPase Era (298 aa).

Residues 3 to 170 enclose the Era-type G domain; that stretch reads KSGFVAILGR…VQLLKDNLEE (168 aa). Residues 11 to 18 are G1; sequence GRPNVGKS. 11 to 18 is a binding site for GTP; that stretch reads GRPNVGKS. The tract at residues 37–41 is G2; that stretch reads QSTRN. The G3 stretch occupies residues 58–61; it reads DTPG. Residues 58–62 and 120–123 contribute to the GTP site; these read DTPGI and NKID. The interval 120–123 is G4; that stretch reads NKID. A G5 region spans residues 149 to 151; sequence ISA. A KH type-2 domain is found at 201 to 279; it reads TQQEVPHSVA…YLETWVKVKK (79 aa).

The protein belongs to the TRAFAC class TrmE-Era-EngA-EngB-Septin-like GTPase superfamily. Era GTPase family. In terms of assembly, monomer.

The protein resides in the cytoplasm. The protein localises to the cell membrane. Its function is as follows. An essential GTPase that binds both GDP and GTP, with rapid nucleotide exchange. Plays a role in 16S rRNA processing and 30S ribosomal subunit biogenesis and possibly also in cell cycle regulation and energy metabolism. This is GTPase Era from Streptococcus equi subsp. zooepidemicus (strain H70).